Consider the following 275-residue polypeptide: NH(3)-dependent NAD(+) synthetase (275 aa).

43–50 (GISGGVDS) is an ATP binding site. D49 contributes to the Mg(2+) binding site. Residue R145 coordinates deamido-NAD(+). An ATP-binding site is contributed by T165. E170 lines the Mg(2+) pocket. The deamido-NAD(+) site is built by K178 and D185. K194 and T216 together coordinate ATP. 265 to 266 (HK) lines the deamido-NAD(+) pocket.

This sequence belongs to the NAD synthetase family. Homodimer.

It catalyses the reaction deamido-NAD(+) + NH4(+) + ATP = AMP + diphosphate + NAD(+) + H(+). Its pathway is cofactor biosynthesis; NAD(+) biosynthesis; NAD(+) from deamido-NAD(+) (ammonia route): step 1/1. Functionally, catalyzes the ATP-dependent amidation of deamido-NAD to form NAD. Uses ammonia as a nitrogen source. The chain is NH(3)-dependent NAD(+) synthetase from Shewanella denitrificans (strain OS217 / ATCC BAA-1090 / DSM 15013).